The primary structure comprises 405 residues: Cytochrome b (405 aa).

The chain crosses the membrane as a helical span at residues 44–64 (FGSLAGIAMIIMIATGIFLAM). Positions 94 and 108 each coordinate heme b. 8 helical membrane passes run 97 to 117 (GASM…YYGS), 124 to 144 (VLWW…FMGY), 163 to 183 (FSAI…GFSV), 191 to 211 (FFSL…LHMW), 245 to 265 (FGLG…PNFF), 303 to 323 (LGGV…PWLD), 338 to 358 (GFFW…AMPA), and 368 to 388 (LATI…GWFE). Heme b-binding residues include His195 and His209.

The protein belongs to the cytochrome b family. The main subunits of complex b-c1 are: cytochrome b, cytochrome c1 and the Rieske protein. The cofactor is heme b.

Its subcellular location is the cell membrane. Its function is as follows. Component of the ubiquinol-cytochrome c reductase complex (complex III or cytochrome b-c1 complex), which is a respiratory chain that generates an electrochemical potential coupled to ATP synthesis. This Rhodospirillum rubrum protein is Cytochrome b (petB).